The sequence spans 559 residues: DNA ligase (559 aa).

Glu-231 lines the ATP pocket. The N6-AMP-lysine intermediate role is filled by Lys-233. 2 residues coordinate ATP: Arg-238 and Glu-285. Residues Glu-285 and Glu-379 each contribute to the Mg(2+) site. The ATP site is built by Lys-384 and Lys-399.

It belongs to the ATP-dependent DNA ligase family. In terms of assembly, interacts with host TOP2A and TOP2B. Requires Mg(2+) as cofactor.

The protein resides in the host cytoplasm. The enzyme catalyses ATP + (deoxyribonucleotide)n-3'-hydroxyl + 5'-phospho-(deoxyribonucleotide)m = (deoxyribonucleotide)n+m + AMP + diphosphate.. Its function is as follows. DNA ligase that seals nicks in double-stranded DNA during DNA replication, DNA recombination and DNA repair. Recruits cellular topoisomerase II to sites of viral replication and assembly. The polypeptide is DNA ligase (OPG180) (Monkeypox virus).